Consider the following 405-residue polypeptide: uncharacterized protein (405 aa).

12 helical membrane-spanning segments follow: residues 32–52 (MFVL…VLAG), 53–73 (WLTF…GVLL), 84–104 (IDMI…WLGW), 108–128 (PVVC…IAGI), 150–170 (AVYS…VGWL), 171–191 (GPEA…VCLS), 237–257 (WGAL…VAAG), 260–280 (VVGL…LLAG), 291–311 (IMTA…AEFG), 314–334 (GLTI…VAML), 352–372 (ISIS…GVVI), and 378–398 (AIFV…LSIP).

This sequence belongs to the major facilitator superfamily.

It is found in the cell membrane. This is an uncharacterized protein from Sinorhizobium fredii (strain NBRC 101917 / NGR234).